Reading from the N-terminus, the 435-residue chain is Xylose isomerase (435 aa).

The Mg(2+) site is built by aspartate 306 and aspartate 308.

This sequence belongs to the xylose isomerase family. In terms of assembly, homotetramer. The cofactor is Mg(2+).

The protein resides in the cytoplasm. The catalysed reaction is alpha-D-xylose = alpha-D-xylulofuranose. This Brucella melitensis biotype 2 (strain ATCC 23457) protein is Xylose isomerase.